We begin with the raw amino-acid sequence, 294 residues long: NAD kinase (294 aa).

Aspartate 72 acts as the Proton acceptor in catalysis. Residues 72 to 73 (DG), 146 to 147 (ND), arginine 157, arginine 174, aspartate 176, 187 to 192 (TAYSLS), and glutamine 247 each bind NAD(+).

It belongs to the NAD kinase family. A divalent metal cation is required as a cofactor.

Its subcellular location is the cytoplasm. The catalysed reaction is NAD(+) + ATP = ADP + NADP(+) + H(+). In terms of biological role, involved in the regulation of the intracellular balance of NAD and NADP, and is a key enzyme in the biosynthesis of NADP. Catalyzes specifically the phosphorylation on 2'-hydroxyl of the adenosine moiety of NAD to yield NADP. This is NAD kinase from Marinobacter nauticus (strain ATCC 700491 / DSM 11845 / VT8) (Marinobacter aquaeolei).